The chain runs to 396 residues: Acetyl-CoA acetyltransferase (396 aa).

C89 acts as the Acyl-thioester intermediate in catalysis. Residues 223 to 225 (RKS) and S249 contribute to the CoA site. Catalysis depends on proton acceptor residues H352 and C382.

The protein belongs to the thiolase-like superfamily. Thiolase family.

It localises to the cytoplasm. The catalysed reaction is 2 acetyl-CoA = acetoacetyl-CoA + CoA. It participates in lipid metabolism; butanoate metabolism. Involved in syntrophic growth of S.wolfei with butyrate, as part of the butyrate oxidation pathway. Probably catalyzes the beta-keto thiolysis of acetoacetyl-CoA, leading to 2 acetyl-CoA molecules. The sequence is that of Acetyl-CoA acetyltransferase from Syntrophomonas wolfei subsp. wolfei (strain DSM 2245B / Goettingen).